Here is a 180-residue protein sequence, read N- to C-terminus: Cytidylate kinase (180 aa).

7 to 15 is an ATP binding site; sequence GLPGSGTST.

The protein belongs to the cytidylate kinase family. Type 2 subfamily.

It localises to the cytoplasm. It carries out the reaction CMP + ATP = CDP + ADP. The enzyme catalyses dCMP + ATP = dCDP + ADP. This Methanosarcina mazei (strain ATCC BAA-159 / DSM 3647 / Goe1 / Go1 / JCM 11833 / OCM 88) (Methanosarcina frisia) protein is Cytidylate kinase (cmk).